Here is a 245-residue protein sequence, read N- to C-terminus: tRNA pseudouridine synthase A (245 aa).

The active-site Nucleophile is the Asp-52. Tyr-112 is a substrate binding site.

Belongs to the tRNA pseudouridine synthase TruA family. As to quaternary structure, homodimer.

The enzyme catalyses uridine(38/39/40) in tRNA = pseudouridine(38/39/40) in tRNA. In terms of biological role, formation of pseudouridine at positions 38, 39 and 40 in the anticodon stem and loop of transfer RNAs. In Dictyoglomus turgidum (strain DSM 6724 / Z-1310), this protein is tRNA pseudouridine synthase A.